An 87-amino-acid chain; its full sequence is Large ribosomal subunit protein eL33 (87 aa).

Belongs to the eukaryotic ribosomal protein eL33 family.

The sequence is that of Large ribosomal subunit protein eL33 from Pyrococcus horikoshii (strain ATCC 700860 / DSM 12428 / JCM 9974 / NBRC 100139 / OT-3).